A 161-amino-acid chain; its full sequence is Large ribosomal subunit protein uL15 (161 aa).

The interval 1-43 is disordered; that stretch reads MKLSDIADNAGARKKRMRVGRGIGSGKGKTSGRGGKGQTARSG. Positions 21-37 are enriched in gly residues; sequence RGIGSGKGKTSGRGGKG.

Belongs to the universal ribosomal protein uL15 family. Part of the 50S ribosomal subunit.

In terms of biological role, binds to the 23S rRNA. This chain is Large ribosomal subunit protein uL15, found in Bradyrhizobium sp. (strain ORS 278).